The chain runs to 248 residues: Probable transcriptional regulatory protein AZC_0510 (248 aa).

Belongs to the TACO1 family.

The protein resides in the cytoplasm. This Azorhizobium caulinodans (strain ATCC 43989 / DSM 5975 / JCM 20966 / LMG 6465 / NBRC 14845 / NCIMB 13405 / ORS 571) protein is Probable transcriptional regulatory protein AZC_0510.